A 367-amino-acid polypeptide reads, in one-letter code: Histidinol-phosphate aminotransferase (367 aa).

An N6-(pyridoxal phosphate)lysine modification is found at Lys221.

This sequence belongs to the class-II pyridoxal-phosphate-dependent aminotransferase family. Histidinol-phosphate aminotransferase subfamily. In terms of assembly, homodimer. Requires pyridoxal 5'-phosphate as cofactor.

The catalysed reaction is L-histidinol phosphate + 2-oxoglutarate = 3-(imidazol-4-yl)-2-oxopropyl phosphate + L-glutamate. The protein operates within amino-acid biosynthesis; L-histidine biosynthesis; L-histidine from 5-phospho-alpha-D-ribose 1-diphosphate: step 7/9. This is Histidinol-phosphate aminotransferase from Erythrobacter litoralis (strain HTCC2594).